A 348-amino-acid polypeptide reads, in one-letter code: A-type ATP synthase subunit C (348 aa).

This sequence belongs to the V-ATPase V0D/AC39 subunit family. Has multiple subunits with at least A(3), B(3), C, D, E, F, H, I and proteolipid K(x).

The protein localises to the cell membrane. Functionally, component of the A-type ATP synthase that produces ATP from ADP in the presence of a proton gradient across the membrane. The sequence is that of A-type ATP synthase subunit C from Haloferax volcanii (strain ATCC 29605 / DSM 3757 / JCM 8879 / NBRC 14742 / NCIMB 2012 / VKM B-1768 / DS2) (Halobacterium volcanii).